The chain runs to 323 residues: Arginase (323 aa).

The Mn(2+) site is built by histidine 119, aspartate 142, histidine 144, and aspartate 146. Residues 144–148, 155–157, and aspartate 198 each bind substrate; these read HADIN and SKN. Mn(2+) contacts are provided by aspartate 247 and aspartate 249. Substrate-binding residues include threonine 261 and glutamate 292.

The protein belongs to the arginase family. In terms of assembly, homotrimer. Mn(2+) serves as cofactor.

The enzyme catalyses L-arginine + H2O = urea + L-ornithine. The protein operates within nitrogen metabolism; urea cycle; L-ornithine and urea from L-arginine: step 1/1. This Schizosaccharomyces pombe (strain 972 / ATCC 24843) (Fission yeast) protein is Arginase (aru1).